A 146-amino-acid polypeptide reads, in one-letter code: Snake venom vascular endothelial growth factor toxin (146 aa).

The N-terminal stretch at 1 to 24 (MAVYLLAVAILFCIQGWPLGTVQG) is a signal peptide. Position 25 is a pyrrolidone carboxylic acid (glutamine 25). 3 cysteine pairs are disulfide-bonded: cysteine 38–cysteine 80, cysteine 69–cysteine 115, and cysteine 73–cysteine 117. Positions 118-146 (RPRSASGVNSRKHKRNPEEGEPRAKFPFV) are disordered. The segment covering 133–146 (NPEEGEPRAKFPFV) has biased composition (basic and acidic residues).

It belongs to the PDGF/VEGF growth factor family. Snake venom VEGF subfamily. As to quaternary structure, homodimer; disulfide-linked. Interacts with VEGF receptor-1 (FLT1) with a high affinity, whereas it binds to VEGF receptor-2 (KDR) with a low affinity. Does not bind VEGF receptor-3 (FLT4). In terms of tissue distribution, expressed by the venom gland.

The protein resides in the secreted. Its function is as follows. Snake venom VEGFs that may contribute to venom dispersion and prey subjugation by inducing vascular permeability and hypotension. This protein induces an increase in capillary permeability after intradermal injection, as well as a drastic hypotensive effect after intravenous injection. The hypotension is mediated by nitric oxide (NO), which is produced by VEGF-activated endothelium NO synthase. Also induces angiogenesis in vitro. Like other crotalid VEGFs, this protein interacts with VEGF receptor-1 (FLT1) with a high affinity, whereas it binds to VEGF receptor-2 (KDR) with a low affinity. The chain is Snake venom vascular endothelial growth factor toxin from Bothrops jararaca (Jararaca).